A 640-amino-acid polypeptide reads, in one-letter code: Choline O-acetyltransferase (640 aa).

Over residues 1-22 (MPDLEKDMQKKEKDSRSKDEPA) the composition is skewed to basic and acidic residues. The segment at 1 to 28 (MPDLEKDMQKKEKDSRSKDEPAVPKLPV) is disordered. Catalysis depends on H334, which acts as the Proton acceptor. CoA is bound by residues 412 to 424 (GKEFIKKQKTSPD), S450, and Q551.

Belongs to the carnitine/choline acetyltransferase family. In terms of tissue distribution, detected in brain and in embryonic retina.

It carries out the reaction choline + acetyl-CoA = acetylcholine + CoA. Catalyzes the reversible synthesis of acetylcholine (ACh) from acetyl CoA and choline at cholinergic synapses. The protein is Choline O-acetyltransferase (CHAT) of Gallus gallus (Chicken).